Consider the following 427-residue polypeptide: Serine--tRNA ligase (427 aa).

231-233 (TAE) lines the L-serine pocket. Residue 262-264 (RSE) participates in ATP binding. Glutamate 285 serves as a coordination point for L-serine. 349–352 (EISS) contributes to the ATP binding site. Residue serine 385 coordinates L-serine.

The protein belongs to the class-II aminoacyl-tRNA synthetase family. Type-1 seryl-tRNA synthetase subfamily. Homodimer. The tRNA molecule binds across the dimer.

It is found in the cytoplasm. The enzyme catalyses tRNA(Ser) + L-serine + ATP = L-seryl-tRNA(Ser) + AMP + diphosphate + H(+). It carries out the reaction tRNA(Sec) + L-serine + ATP = L-seryl-tRNA(Sec) + AMP + diphosphate + H(+). The protein operates within aminoacyl-tRNA biosynthesis; selenocysteinyl-tRNA(Sec) biosynthesis; L-seryl-tRNA(Sec) from L-serine and tRNA(Sec): step 1/1. In terms of biological role, catalyzes the attachment of serine to tRNA(Ser). Is also able to aminoacylate tRNA(Sec) with serine, to form the misacylated tRNA L-seryl-tRNA(Sec), which will be further converted into selenocysteinyl-tRNA(Sec). This is Serine--tRNA ligase from Brucella canis (strain ATCC 23365 / NCTC 10854 / RM-666).